Consider the following 558-residue polypeptide: Potassium-transporting ATPase potassium-binding subunit (558 aa).

A run of 11 helical transmembrane segments spans residues 1–21 (MDTL…VLIH), 59–79 (PAYL…VYGL), 85–105 (FLPY…NTAV), 130–150 (GLAV…IALV), 179–199 (LSLV…FAGF), 245–265 (PTAW…FSLP), 279–299 (TAIV…LTIF), 374–394 (GLYG…LLVG), 416–436 (ILVT…IPAV), 484–504 (ALGV…LALA), and 527–547 (FVGL…FPVL).

This sequence belongs to the KdpA family. The system is composed of three essential subunits: KdpA, KdpB and KdpC.

It localises to the cell membrane. In terms of biological role, part of the high-affinity ATP-driven potassium transport (or Kdp) system, which catalyzes the hydrolysis of ATP coupled with the electrogenic transport of potassium into the cytoplasm. This subunit binds the extracellular potassium ions and delivers the ions to the membrane domain of KdpB through an intramembrane tunnel. The protein is Potassium-transporting ATPase potassium-binding subunit of Clavibacter michiganensis subsp. michiganensis (strain NCPPB 382).